The primary structure comprises 203 residues: ATP-dependent Clp protease proteolytic subunit 1 (203 aa).

The active-site Nucleophile is Ser101. The active site involves His126.

The protein belongs to the peptidase S14 family. As to quaternary structure, fourteen ClpP subunits assemble into 2 heptameric rings which stack back to back to give a disk-like structure with a central cavity, resembling the structure of eukaryotic proteasomes.

It is found in the cytoplasm. It carries out the reaction Hydrolysis of proteins to small peptides in the presence of ATP and magnesium. alpha-casein is the usual test substrate. In the absence of ATP, only oligopeptides shorter than five residues are hydrolyzed (such as succinyl-Leu-Tyr-|-NHMec, and Leu-Tyr-Leu-|-Tyr-Trp, in which cleavage of the -Tyr-|-Leu- and -Tyr-|-Trp bonds also occurs).. Its function is as follows. Cleaves peptides in various proteins in a process that requires ATP hydrolysis. Has a chymotrypsin-like activity. Plays a major role in the degradation of misfolded proteins. In Synechococcus sp. (strain JA-3-3Ab) (Cyanobacteria bacterium Yellowstone A-Prime), this protein is ATP-dependent Clp protease proteolytic subunit 1.